The following is a 172-amino-acid chain: Adenine phosphoribosyltransferase (172 aa).

It belongs to the purine/pyrimidine phosphoribosyltransferase family. In terms of assembly, homodimer.

Its subcellular location is the cytoplasm. The catalysed reaction is AMP + diphosphate = 5-phospho-alpha-D-ribose 1-diphosphate + adenine. It participates in purine metabolism; AMP biosynthesis via salvage pathway; AMP from adenine: step 1/1. Functionally, catalyzes a salvage reaction resulting in the formation of AMP, that is energically less costly than de novo synthesis. The chain is Adenine phosphoribosyltransferase from Streptococcus agalactiae serotype III (strain NEM316).